Reading from the N-terminus, the 427-residue chain is 5'-deoxyadenosine deaminase (427 aa).

Zn(2+) contacts are provided by His62 and His64. Residues Glu91 and His183 each coordinate substrate. Residue His210 participates in Zn(2+) binding. Positions 213 and 298 each coordinate substrate. Asp298 is a Zn(2+) binding site.

Belongs to the metallo-dependent hydrolases superfamily. MTA/SAH deaminase family. In terms of assembly, homotetramer. It depends on Zn(2+) as a cofactor.

The enzyme catalyses 5'-deoxyadenosine + H2O + H(+) = 5'-deoxyinosine + NH4(+). It carries out the reaction S-adenosyl-L-homocysteine + H2O + H(+) = S-inosyl-L-homocysteine + NH4(+). It catalyses the reaction S-methyl-5'-thioadenosine + H2O + H(+) = S-methyl-5'-thioinosine + NH4(+). The catalysed reaction is adenosine + H2O + H(+) = inosine + NH4(+). It participates in amino-acid biosynthesis; S-adenosyl-L-methionine biosynthesis. Its function is as follows. Catalyzes the deamination of three SAM-derived enzymatic products, namely 5'-deoxyadenosine, S-adenosyl-L-homocysteine, and 5'-methylthioadenosine, to produce the inosine analogs. Can also deaminate adenosine. The preferred substrate for this enzyme is 5'-deoxyadenosine, but all these substrates are efficiently deaminated. Likely functions in a S-adenosyl-L-methionine (SAM) recycling pathway from S-adenosyl-L-homocysteine (SAH) produced from SAM-dependent methylation reactions. May also be involved in the recycling of 5'-deoxyadenosine, whereupon the 5'-deoxyribose moiety of 5'-deoxyinosine is further metabolized to deoxyhexoses used for the biosynthesis of aromatic amino acids in methanogens. The sequence is that of 5'-deoxyadenosine deaminase from Methanothermobacter thermautotrophicus (strain ATCC 29096 / DSM 1053 / JCM 10044 / NBRC 100330 / Delta H) (Methanobacterium thermoautotrophicum).